The primary structure comprises 135 residues: Transcriptional regulator HosA (135 aa).

The 131-residue stretch at 4 to 134 folds into the HTH marR-type domain; sequence RNKAFHQLRQ…FMQLVRKMMN (131 aa). Positions 48–71 form a DNA-binding region, H-T-H motif; that stretch reads QVALIEAAVSTKATLAEMLARMEN.

Functionally, involved in the temperature-dependent positive control of flagellum-driven swimming motility and cellular aggregation. Regulates fliC expression by directly interacting with fliC promoter. The chain is Transcriptional regulator HosA (hosA) from Escherichia coli O111:H-.